A 1832-amino-acid chain; its full sequence is Multifunctional protein pyr-3 (1832 aa).

Residues 2-400 (AATVYRPATA…PGPRDTEFLF (399 aa)) form a GATase (Glutamine amidotransferase) region. The L-glutamine site is built by serine 64, glycine 273, and glycine 275. The Glutamine amidotransferase type-1 domain maps to 228 to 413 (RILCLDVGMK…IQTVAKCTTD (186 aa)). The active-site Nucleophile; for GATase activity is cysteine 302. 5 residues coordinate L-glutamine: leucine 303, glutamine 306, asparagine 344, glycine 346, and tyrosine 347. Active-site for GATase activity residues include histidine 386 and glutamate 388. A linker region spans residues 401 to 442 (DVFIQTVAKCTTDNTLLQKGVEFPGGTTEENERLHPRVDVKK). Residues 443–983 (VLVLGSGGLS…SEHDVSFEDR (541 aa)) form a CPSase A region. Residues 443–1484 (VLVLGSGGLS…TNVKNAKILV (1042 aa)) are CPSase (Carbamoyl phosphate synthase). ATP is bound by residues arginine 560, arginine 600, glycine 606, glycine 607, arginine 637, methionine 639, glutamate 644, glycine 670, isoleucine 671, histidine 672, glutamine 713, and glutamate 727. ATP-grasp domains lie at 564-756 (ARSM…KLGL) and 1102-1293 (SRML…KAIM). Residues glutamine 713, glutamate 727, and asparagine 729 each contribute to the Mg(2+) site. Positions 713, 727, and 729 each coordinate Mn(2+). Positions 984 to 1484 (GVMVLGSGVY…TNVKNAKILV (501 aa)) are CPSase B. Arginine 1138, lysine 1177, isoleucine 1179, glutamate 1184, glycine 1209, valine 1210, histidine 1211, serine 1212, glutamine 1252, and glutamate 1264 together coordinate ATP. Mg(2+) contacts are provided by glutamine 1252, glutamate 1264, and asparagine 1266. Positions 1252, 1264, and 1266 each coordinate Mn(2+). The region spanning 1359 to 1507 (FKVPKKNILL…RDYQTSHTPL (149 aa)) is the MGS-like domain. The segment at 1485–1528 (EAIARYRDMEIGERDYQTSHTPLQLSGQVNFTLQDSLSRPHSFK) is linker. The interval 1529–1832 (KAHVLSVEQY…MALLALVMSG (304 aa)) is ATCase (Aspartate transcarbamylase). 2 residues coordinate carbamoyl phosphate: arginine 1581 and threonine 1582. Residue lysine 1609 coordinates L-aspartate. Carbamoyl phosphate is bound by residues arginine 1630, histidine 1658, and glutamine 1661. Positions 1691 and 1754 each coordinate L-aspartate. 2 residues coordinate carbamoyl phosphate: leucine 1793 and proline 1794.

It in the N-terminal section; belongs to the CarA family. This sequence in the central section; belongs to the CarB family. In the C-terminal section; belongs to the aspartate/ornithine carbamoyltransferase superfamily. ATCase family. Mg(2+) is required as a cofactor. The cofactor is Mn(2+).

It localises to the cytoplasm. The protein localises to the nucleus. It carries out the reaction hydrogencarbonate + L-glutamine + 2 ATP + H2O = carbamoyl phosphate + L-glutamate + 2 ADP + phosphate + 2 H(+). The enzyme catalyses L-glutamine + H2O = L-glutamate + NH4(+). The catalysed reaction is hydrogencarbonate + NH4(+) + 2 ATP = carbamoyl phosphate + 2 ADP + phosphate + 2 H(+). It catalyses the reaction carbamoyl phosphate + L-aspartate = N-carbamoyl-L-aspartate + phosphate + H(+). It functions in the pathway pyrimidine metabolism; UMP biosynthesis via de novo pathway; (S)-dihydroorotate from bicarbonate: step 1/3. It participates in pyrimidine metabolism; UMP biosynthesis via de novo pathway; (S)-dihydroorotate from bicarbonate: step 2/3. Both CPSase and ATCase activities are feedback inhibited by the end product UTP. Functionally, multifunctional protein that encodes the first 2 enzymatic activities of the de novo pyrimidine pathway: carbamoylphosphate synthetase (CPSase; EC 6.3.5.5) and aspartate transcarbamylase (ATCase; EC 2.1.3.2). The CPSase-function is accomplished in 2 steps, by a glutamine-dependent amidotransferase activity (GATase) that binds and cleaves glutamine to produce ammonia, followed by an ammonium-dependent carbamoyl phosphate synthetase, which reacts with the ammonia, hydrogencarbonate and ATP to form carbamoyl phosphate. The endogenously produced carbamoyl phosphate is sequestered and channeled to the ATCase active site. ATCase then catalyzes the formation of carbamoyl-L-aspartate from L-aspartate and carbamoyl phosphate. In Neurospora crassa (strain ATCC 24698 / 74-OR23-1A / CBS 708.71 / DSM 1257 / FGSC 987), this protein is Multifunctional protein pyr-3 (pyr-3).